Here is a 510-residue protein sequence, read N- to C-terminus: MRALISVSDKEGVVEFAKGLEQLGWQIVSTGGTYKILNENGVKAVEVAQITQSPEMFEGRVKTLHPKIHGGILYKRDDASHVAQAKEFGIEGIDLVCVNLYPFKETTIRTDDFDEIIENIDIGGPAMVRSAAKNFKDVLIVTSVLDYDEILQRLKEGTDDLEFRRNLMIKAYEHTASYDATIANYMNERFKGGFGDARFIFGNKVFDTRYGENPHQKGALYEFEYFFTNNFRALKGEASFNNMTDINGAVMLATSFENAPVVAIVKHSNPCGLAVKDSLLESYVEALKCDPISAYGGVVAINGTLDRALARKINEIYVEVIIAANVDDDALAVFENKKRIKIFTQDNKFLVRAGDKFDFKHIDGGFVFQERDVVSDDELKNMKQMSKKHANENQLKDAQIAWKVAALTKSNCVVYVKDGAMVAIGMGMTSRVDAARAAVAKAKELDLDLHGCVLASEAFFPFRDSIDIASKVGVKCVIEPGGSIRDDEVIEAANEHGMSLYFTGVRHFLH.

The 142-residue stretch at 1 to 142 folds into the MGS-like domain; it reads MRALISVSDK…KNFKDVLIVT (142 aa).

The protein belongs to the PurH family.

It catalyses the reaction (6R)-10-formyltetrahydrofolate + 5-amino-1-(5-phospho-beta-D-ribosyl)imidazole-4-carboxamide = 5-formamido-1-(5-phospho-D-ribosyl)imidazole-4-carboxamide + (6S)-5,6,7,8-tetrahydrofolate. The catalysed reaction is IMP + H2O = 5-formamido-1-(5-phospho-D-ribosyl)imidazole-4-carboxamide. It functions in the pathway purine metabolism; IMP biosynthesis via de novo pathway; 5-formamido-1-(5-phospho-D-ribosyl)imidazole-4-carboxamide from 5-amino-1-(5-phospho-D-ribosyl)imidazole-4-carboxamide (10-formyl THF route): step 1/1. The protein operates within purine metabolism; IMP biosynthesis via de novo pathway; IMP from 5-formamido-1-(5-phospho-D-ribosyl)imidazole-4-carboxamide: step 1/1. The sequence is that of Bifunctional purine biosynthesis protein PurH from Campylobacter curvus (strain 525.92).